Reading from the N-terminus, the 467-residue chain is Fumarate hydratase class II (467 aa).

Residues 98 to 100 (SGT), arginine 126, 129 to 132 (HPND), 139 to 141 (SSN), and threonine 187 contribute to the substrate site. Histidine 188 functions as the Proton donor/acceptor in the catalytic mechanism. Serine 318 is a catalytic residue. Residues serine 319 and 324 to 326 (KVN) contribute to the substrate site.

The protein belongs to the class-II fumarase/aspartase family. Fumarase subfamily. As to quaternary structure, homotetramer.

The protein localises to the cytoplasm. The enzyme catalyses (S)-malate = fumarate + H2O. The protein operates within carbohydrate metabolism; tricarboxylic acid cycle; (S)-malate from fumarate: step 1/1. In terms of biological role, involved in the TCA cycle. Catalyzes the stereospecific interconversion of fumarate to L-malate. This is Fumarate hydratase class II from Escherichia coli O6:H1 (strain CFT073 / ATCC 700928 / UPEC).